A 644-amino-acid polypeptide reads, in one-letter code: Ribonuclease R (644 aa).

The RNB domain occupies 211-529 (RINYSHIPFI…LHRLLKELLF (319 aa)). The S1 motif domain maps to 573–644 (LELLEKEFLG…ITERIKEHVS (72 aa)).

Belongs to the RNR ribonuclease family. RNase R subfamily.

The protein resides in the cytoplasm. It carries out the reaction Exonucleolytic cleavage in the 3'- to 5'-direction to yield nucleoside 5'-phosphates.. In terms of biological role, 3'-5' exoribonuclease that releases 5'-nucleoside monophosphates and is involved in maturation of structured RNAs. This Helicobacter pylori (strain ATCC 700392 / 26695) (Campylobacter pylori) protein is Ribonuclease R.